Consider the following 224-residue polypeptide: N-(5'-phosphoribosyl)anthranilate isomerase (224 aa).

The protein belongs to the TrpF family.

It carries out the reaction N-(5-phospho-beta-D-ribosyl)anthranilate = 1-(2-carboxyphenylamino)-1-deoxy-D-ribulose 5-phosphate. Its pathway is amino-acid biosynthesis; L-tryptophan biosynthesis; L-tryptophan from chorismate: step 3/5. This chain is N-(5'-phosphoribosyl)anthranilate isomerase (TRP1), found in Saccharomyces cerevisiae (strain ATCC 204508 / S288c) (Baker's yeast).